The chain runs to 650 residues: Cytosolic Fe-S cluster assembly factor NAR1 (650 aa).

[4Fe-4S] cluster-binding residues include C22, C81, C84, C87, C215, C270, C480, and C484.

Belongs to the NARF family.

Component of the cytosolic Fe/S protein assembly machinery. Required for maturation of extramitochondrial Fe/S proteins. May play a role in the transfer of pre-assembled Fe/S clusters to target apoproteins. This Cryptococcus neoformans var. neoformans serotype D (strain JEC21 / ATCC MYA-565) (Filobasidiella neoformans) protein is Cytosolic Fe-S cluster assembly factor NAR1 (NAR1).